A 499-amino-acid polypeptide reads, in one-letter code: Cysteine--tRNA ligase (499 aa).

Residue Cys30 participates in Zn(2+) binding. The 'HIGH' region motif lies at 32-42 (PTVYDRAHLGN). Residues Cys221, His246, and Glu250 each coordinate Zn(2+). Positions 279 to 283 (KMSKS) match the 'KMSKS' region motif. Residue Lys282 coordinates ATP.

The protein belongs to the class-I aminoacyl-tRNA synthetase family. In terms of assembly, monomer. Zn(2+) is required as a cofactor.

The protein localises to the cytoplasm. It catalyses the reaction tRNA(Cys) + L-cysteine + ATP = L-cysteinyl-tRNA(Cys) + AMP + diphosphate. This chain is Cysteine--tRNA ligase, found in Cereibacter sphaeroides (strain ATCC 17023 / DSM 158 / JCM 6121 / CCUG 31486 / LMG 2827 / NBRC 12203 / NCIMB 8253 / ATH 2.4.1.) (Rhodobacter sphaeroides).